Consider the following 324-residue polypeptide: Heat-inducible transcription repressor HrcA (324 aa).

It belongs to the HrcA family.

Its function is as follows. Negative regulator of class I heat shock genes (grpE-dnaK-dnaJ and groELS operons). Prevents heat-shock induction of these operons. In Parasynechococcus marenigrum (strain WH8102), this protein is Heat-inducible transcription repressor HrcA.